Reading from the N-terminus, the 187-residue chain is GTP cyclohydrolase 1 (187 aa).

The Zn(2+) site is built by Cys-76, His-79, and Cys-148.

This sequence belongs to the GTP cyclohydrolase I family. In terms of assembly, toroid-shaped homodecamer, composed of two pentamers of five dimers.

The enzyme catalyses GTP + H2O = 7,8-dihydroneopterin 3'-triphosphate + formate + H(+). Its pathway is cofactor biosynthesis; 7,8-dihydroneopterin triphosphate biosynthesis; 7,8-dihydroneopterin triphosphate from GTP: step 1/1. The protein is GTP cyclohydrolase 1 of Streptococcus thermophilus (strain CNRZ 1066).